Reading from the N-terminus, the 716-residue chain is MNLFSPRTGLSPTETQELLYAYTGPAPVAYGTRTRAVLENVLRPYKYFYKEENVPQALHIKTGQKGPEEISTTSPSSGFHRDSVILLSRELKAKYPEAFERLKAWIDCELLEMEYAELSKGRQTLSFLRNRNQPAPIALEETIEYLQQNLGRPIGQSMLSYLRAVMEVLAMPKTTFTYEVATNLARFDFEEYDDGETGPLMMHFEKEKKKITITITQAELWEKTCTLGTMWKHLERGRLNRRTIATPSMLARGFVKIVEDAARVLLECLPSSGVPVGGEEKLAKLSSKLEAVSEVTGELSGDQEKFNECLDPDAMRLMWTVFLEDYPQWVKELFNIPFLIFKAKIADIGEGLTYQKEGVVRVFPFGEMPSEFDELLPNAIKDKEGKIVGIRCTLGMFMGMFNLSSTLLALIAADRSEITGDHVESSDDFIHFFKAKSYDDMFKQAELLRWSLKLVGINMSPSKCILISPAGIGEFNSKYHHRDFVGNVATDLPSLVPGGKNPSSDLAMGLNVIRHSINTNQMNFISGDLALRIFTKAYRHSYMAEGITRRTKFLEAFKKDPVLLNQGAPTVHSVSTLHLDEVCLRYQMHLLGEEELRRIMNPSNPITARTEEVVSFRPEGKLPMILEDNSVGSCFKYTFTRNRTVTDKPHRVLLEKEQQYQKITSFVEECFPELTIGNTTMPGTVKQACKRRLEYIIEQSDLPTEQKRALLEEMDS.

In terms of domain architecture, RdRp catalytic spans 286-465 (SSKLEAVSEV…GINMSPSKCI (180 aa)).

It belongs to the influenza viruses polymerase PB1 family. RNA polymerase is composed of three subunits: PA, PB1 and PB2.

The enzyme catalyses RNA(n) + a ribonucleoside 5'-triphosphate = RNA(n+1) + diphosphate. This chain is RNA-directed RNA polymerase catalytic subunit (P2), found in Dhori virus (strain Indian/1313/61) (Dho).